Here is a 164-residue protein sequence, read N- to C-terminus: Phosphopantetheine adenylyltransferase (164 aa).

Serine 11 contributes to the substrate binding site. Residues 11–12 (SF) and histidine 19 each bind ATP. Substrate contacts are provided by lysine 43, leucine 75, and arginine 89. ATP is bound by residues 90–92 (GLR), glutamate 100, and 125–131 (YGYLSSS).

Belongs to the bacterial CoaD family. In terms of assembly, homohexamer. Mg(2+) is required as a cofactor.

Its subcellular location is the cytoplasm. It catalyses the reaction (R)-4'-phosphopantetheine + ATP + H(+) = 3'-dephospho-CoA + diphosphate. The protein operates within cofactor biosynthesis; coenzyme A biosynthesis; CoA from (R)-pantothenate: step 4/5. Its function is as follows. Reversibly transfers an adenylyl group from ATP to 4'-phosphopantetheine, yielding dephospho-CoA (dPCoA) and pyrophosphate. This is Phosphopantetheine adenylyltransferase from Geobacter sulfurreducens (strain ATCC 51573 / DSM 12127 / PCA).